The following is a 202-amino-acid chain: UPF0056 membrane protein CPn_1010/CP_0843/CPj1010/CpB1048 (202 aa).

Transmembrane regions (helical) follow at residues 7–27, 39–59, 61–81, 105–125, 137–157, and 175–195; these read LSLL…FVAL, VILR…TFGR, FFQF…FLLF, PIFF…TALL, IIFT…LCSS, and FGIA…SIAF.

It belongs to the UPF0056 (MarC) family.

The protein resides in the cell membrane. The chain is UPF0056 membrane protein CPn_1010/CP_0843/CPj1010/CpB1048 from Chlamydia pneumoniae (Chlamydophila pneumoniae).